The sequence spans 361 residues: Histidinol-phosphate aminotransferase (361 aa).

The residue at position 223 (Lys223) is an N6-(pyridoxal phosphate)lysine.

The protein belongs to the class-II pyridoxal-phosphate-dependent aminotransferase family. Histidinol-phosphate aminotransferase subfamily. As to quaternary structure, homodimer. Pyridoxal 5'-phosphate is required as a cofactor.

The catalysed reaction is L-histidinol phosphate + 2-oxoglutarate = 3-(imidazol-4-yl)-2-oxopropyl phosphate + L-glutamate. It functions in the pathway amino-acid biosynthesis; L-histidine biosynthesis; L-histidine from 5-phospho-alpha-D-ribose 1-diphosphate: step 7/9. The sequence is that of Histidinol-phosphate aminotransferase from Deinococcus radiodurans (strain ATCC 13939 / DSM 20539 / JCM 16871 / CCUG 27074 / LMG 4051 / NBRC 15346 / NCIMB 9279 / VKM B-1422 / R1).